A 110-amino-acid chain; its full sequence is Quaternary ammonium compound-resistance protein QacE (110 aa).

4 helical membrane passes run 1–21 (MKGWLFLVIAIVGEVIATSAL), 30–50 (LAPSAVVIIGYGIAFYFLSLV), 58–78 (VAYAVWSGLGVVIITAIAWLL), and 85–105 (AWGFVGMGLIVSGVVVLNLLS).

It belongs to the drug/metabolite transporter (DMT) superfamily. Small multidrug resistance (SMR) (TC 2.A.7.1) family.

Its subcellular location is the cell membrane. Functionally, multidrug exporter. Is implicated for the resistance to bacteriocidal quaternary ammonium compounds. The chain is Quaternary ammonium compound-resistance protein QacE (qacE) from Escherichia coli.